A 589-amino-acid chain; its full sequence is Malto-oligosyltrehalose trehalohydrolase (589 aa).

Gly256–His261 lines the substrate pocket. Asp258 acts as the Nucleophile in catalysis. Glu295 serves as the catalytic Proton donor. Residues Asp320–Thr324 and His390–Asn395 contribute to the substrate site.

Belongs to the glycosyl hydrolase 13 family.

It is found in the cytoplasm. It carries out the reaction hydrolysis of (1-&gt;4)-alpha-D-glucosidic linkage in 4-alpha-D-[(1-&gt;4)-alpha-D-glucanosyl]n trehalose to yield trehalose and (1-&gt;4)-alpha-D-glucan.. It functions in the pathway glycan biosynthesis; trehalose biosynthesis. This is Malto-oligosyltrehalose trehalohydrolase (treZ) from Brevibacterium helvolum.